Reading from the N-terminus, the 333-residue chain is Dipeptide transport system permease protein DppB (333 aa).

6 helical membrane passes run 10–30 (LLLI…IHLI), 99–119 (IELT…AGIV), 130–150 (YLSM…LALM), 197–217 (SIKH…AIIA), 256–276 (LIPV…GAIL), and 300–320 (PVIQ…NLFV). An ABC transmembrane type-1 domain is found at 95 to 324 (LAATIELTIF…LINLFVDLLY (230 aa)).

Belongs to the binding-protein-dependent transport system permease family. OppBC subfamily.

Its subcellular location is the cell membrane. In terms of biological role, probably part of the ABC transporter Dpp involved in dipeptide transport. Responsible for the translocation of the substrate across the membrane. This Alkalihalophilus pseudofirmus (strain ATCC BAA-2126 / JCM 17055 / OF4) (Bacillus pseudofirmus) protein is Dipeptide transport system permease protein DppB (dppB).